Here is a 163-residue protein sequence, read N- to C-terminus: Nucleotide-binding protein YajQ (163 aa).

It belongs to the YajQ family.

Functionally, nucleotide-binding protein. The chain is Nucleotide-binding protein YajQ from Salmonella heidelberg (strain SL476).